A 146-amino-acid chain; its full sequence is Transmembrane protein 207 (146 aa).

An N-terminal signal peptide occupies residues 1 to 29 (MSRSRLFSVTSAISTIGILCLPLFQLVLS). A helical membrane pass occupies residues 52-72 (IWILLLLVLVAALLCGAVVLC).

Interacts with WWOX. Expressed in some signet-ring cell carcinoma, especially those showing high invasion and metastatic activity (at protein level).

It is found in the membrane. In Homo sapiens (Human), this protein is Transmembrane protein 207 (TMEM207).